We begin with the raw amino-acid sequence, 551 residues long: Putative transport protein HI_0035 (551 aa).

5 helical membrane passes run 4-24, 28-48, 65-85, 95-115, and 157-177; these read IAIT…IGHW, GVGL…HFTN, FGLI…FFSS, AFAI…HKIA, and VSYA…MWLI. RCK C-terminal domains are found at residues 191–275 and 277–360; these read RFNA…IIGH and VDAP…VIGN. Transmembrane regions (helical) follow at residues 370 to 390, 402 to 424, 438 to 458, 463 to 483, 492 to 512, and 529 to 549; these read MLPV…PFYI, AGGP…LYWF, IVLF…DTLV, LEWM…VGTI, YLTI…LAFA, and VYPL…VLLW.

Belongs to the AAE transporter (TC 2.A.81) family. YidE subfamily.

The protein resides in the cell membrane. In Haemophilus influenzae (strain ATCC 51907 / DSM 11121 / KW20 / Rd), this protein is Putative transport protein HI_0035.